Reading from the N-terminus, the 1040-residue chain is Chromatin modification-related protein rik1 (1040 aa).

This sequence belongs to the DDB1 family. As to quaternary structure, component of the Clr4 methyltransferase complex (ClrC) composed of at least clr4, rik1, pcu4, rbx1, raf1 and raf2. The cullin pcu4, rik1, raf1, raf2 and the ring-box protein rbx1 are components of an E3 ubiquitin ligase, whose activity is essential for heterochromatin assembly.

It is found in the nucleus. Its subcellular location is the cytoplasm. The protein localises to the cytoskeleton. The protein resides in the microtubule organizing center. It localises to the spindle pole body. It is found in the chromosome. Component of the Clr4 methyltransferase complex (ClrC) which contributes to the establishment of heterochromatin by specifically methylating histone H3 to form H3K9me. ClrC preferentially ubiquitylates H3K14 and ClrC-mediated H3 ubiquitination promotes clr4 methyltransferase activity for the methylation of H3K9. H3K9me represents a specific tag for epigenetic transcriptional repression by recruiting swi6/HP1 to methylated histones which leads to transcriptional silencing within centromeric heterochromatin, telomeric regions and at the silent mating-type loci. Rik1 is involved in the RNAi-mediated targeting of ClrC to heterochromatic repeat elements. Rik1 also has a function in meiotic telomere clustering. The sequence is that of Chromatin modification-related protein rik1 (rik1) from Schizosaccharomyces pombe (strain 972 / ATCC 24843) (Fission yeast).